The following is a 329-amino-acid chain: MSEKIHITQNSGNVDHTVEALGHAISGGVAGMAAIALTYPFSTVSTRLQVQQKKQQQGQQSEITTVPYKNSIDAFKRIIKEENWRTLYSGLKSALIGIGASSFVYYYWYTLLKSISLKLKNKQELGTIENLAIAALAGCANVLTTLPIWVVNTRLQINSDKGIVGQFKYIIKNEGFGGLYKGLIPALILVSNPSVQFVSYEKLRALWRRQSGRTKLGGLEVFILGAIAKLIAGIVTYPYLLVKSRLQSQSGNASNPESQQQQYKGTLDAIGKIFKSDGFLGFFKGMPSKMVQTVIGAAFMFLVKDKVVIHAVAILFYLKRLLNKNNKRV.

Solcar repeat units follow at residues 18–115, 125–206, and 216–310; these read VEAL…LKSI, LGTI…LRAL, and LGGL…VVIH. Transmembrane regions (helical) follow at residues 21-41, 95-115, 131-151, 175-195, 221-241, and 298-318; these read LGHA…TYPF, LIGI…LKSI, LAIA…IWVV, GFGG…NPSV, VFIL…PYLL, and AFMF…LFYL.

It belongs to the mitochondrial carrier (TC 2.A.29) family.

The protein localises to the peroxisome membrane. May have transport activity. The protein is Mitochondrial substrate carrier family protein Q (mcfQ) of Dictyostelium discoideum (Social amoeba).